A 399-amino-acid polypeptide reads, in one-letter code: Bombesin receptor subtype-3 (399 aa).

Residues 1–41 lie on the Extracellular side of the membrane; that stretch reads MSQRQPQSPNQTLISITNDTETSSSAVSNDTTPKGWTGDNS. Residues N10, N18, and N29 are each glycosylated (N-linked (GlcNAc...) asparagine). A helical transmembrane segment spans residues 42-63; it reads PGIEALCAIYITYAVIISVGIL. Residues 64 to 82 lie on the Cytoplasmic side of the membrane; sequence GNAILIKVFFKTKSMQTVP. Residues 83 to 103 form a helical membrane-spanning segment; the sequence is NIFITSLAFGDLLLLLTCVPV. The Extracellular portion of the chain corresponds to 104-121; that stretch reads DATHYLAEGWLFGKVGCK. Residues C120 and C203 are joined by a disulfide bond. The chain crosses the membrane as a helical span at residues 122-143; the sequence is VLSFIRLTSVGVSVFTLTILSA. Residues 144-163 lie on the Cytoplasmic side of the membrane; the sequence is DRYKAVVKPLERQPSNAILK. Residues 164-184 traverse the membrane as a helical segment; the sequence is TCAKAGGIWIMAMIFALPEAI. The Extracellular segment spans residues 185 to 220; the sequence is FSNVYTFQDPNRNVTFESCNSYPISERLLQEIHSLL. A helical membrane pass occupies residues 221 to 241; sequence CFLVFYIIPLSIISVYYSLIA. At 242-272 the chain is on the cytoplasmic side; it reads RTLYKSTLNIPTEEQSHARKQIESRKRIAKT. A helical membrane pass occupies residues 273 to 293; that stretch reads VLVLVALFALCWLPNHLLYLY. Residues 294–313 are Extracellular-facing; that stretch reads HSFTYESYAEPSDVPFVVTI. A helical transmembrane segment spans residues 314 to 333; the sequence is FSRVLAFSNSCVNPFALYWL. The Cytoplasmic segment spans residues 334 to 399; it reads SKTFQKHFKA…STAKKGEDKV (66 aa). The S-palmitoyl cysteine moiety is linked to residue C347.

This sequence belongs to the G-protein coupled receptor 1 family. Interacts with C6orf89.

Its subcellular location is the cell membrane. Role in sperm cell division, maturation, or function. This receptor mediates its action by association with G proteins that activate a phosphatidylinositol-calcium second messenger system. This is Bombesin receptor subtype-3 (Brs3) from Rattus norvegicus (Rat).